Consider the following 253-residue polypeptide: Large ribosomal subunit protein uL2C (253 aa).

It belongs to the universal ribosomal protein uL2 family. Component of the large ribosomal subunit (LSU). Mature yeast ribosomes consist of a small (40S) and a large (60S) subunit. The 40S small subunit contains 1 molecule of ribosomal RNA (18S rRNA) and at least 33 different proteins. The large 60S subunit contains 3 rRNA molecules (25S, 5.8S and 5S rRNA) and at least 46 different proteins.

The protein resides in the cytoplasm. The protein localises to the nucleus. In terms of biological role, component of the ribosome, a large ribonucleoprotein complex responsible for the synthesis of proteins in the cell. The small ribosomal subunit (SSU) binds messenger RNAs (mRNAs) and translates the encoded message by selecting cognate aminoacyl-transfer RNA (tRNA) molecules. The large subunit (LSU) contains the ribosomal catalytic site termed the peptidyl transferase center (PTC), which catalyzes the formation of peptide bonds, thereby polymerizing the amino acids delivered by tRNAs into a polypeptide chain. The nascent polypeptides leave the ribosome through a tunnel in the LSU and interact with protein factors that function in enzymatic processing, targeting, and the membrane insertion of nascent chains at the exit of the ribosomal tunnel. The chain is Large ribosomal subunit protein uL2C (rpl803) from Schizosaccharomyces pombe (strain 972 / ATCC 24843) (Fission yeast).